The following is a 644-amino-acid chain: MFQDNPLLAQLKQQLHSQTPRAEGVVKATEKGFGFLEVDAQKSYFIPPPQMKKVMHGDRIVAVIHTEKERESAEPEELIEPFLTRFVGKVQGKNDRLSIVPDHPLLKDAIPCRAARGVQHEFKEGDWAVAEMRRHPLKGDRSFYADLTQYITFADDHFVPWWVTLARHNLEKEAPNGVATEMLDEGLERQDLTALNFVTIDSASTEDMDDALYAEELADGRLQLTVAIADPTAWIAEGSKLDNAAKIRAFTNYLPGFNIPMLPRELSDDLCSLRANEVRPALACRMIISADGTIDDDIAFFAATIESKAKLAYDNVSDWLENNGTWQPDNEGIAHQIRLLHRICLSRSEWRHHHALVFKDRPDYRFVLGEKGEVLDIVAEPRRIANRIVEESMIAANLCAARVLRDKLGFGIYNVHTGFDPANADALAALLKTHGLHVDAEEVLTLEGFCKLRRELDAQPSGFLDSRIRRFQSFAEISTEPGPHFGLGLEAYATWTSPIRKYGDMINHRLLKAVIKGEAIARPQEDITQQMAERRRLNRMAERDVGDWLYARFLNDKAGTNTRFAAEIIDVSRGGMRVRLVDNGAIAFIPAPFLHAVRDELVCSQENGTVQIKGETVYKVTDVIDVTIAEVRMETRSIIARPAA.

The RNB domain occupies 189–516 (RQDLTALNFV…NHRLLKAVIK (328 aa)). An S1 motif domain is found at 561–643 (NTRFAAEIID…ETRSIIARPA (83 aa)).

Belongs to the RNR ribonuclease family. RNase II subfamily.

The protein resides in the cytoplasm. The enzyme catalyses Exonucleolytic cleavage in the 3'- to 5'-direction to yield nucleoside 5'-phosphates.. Its function is as follows. Involved in mRNA degradation. Hydrolyzes single-stranded polyribonucleotides processively in the 3' to 5' direction. The polypeptide is Exoribonuclease 2 (Salmonella enteritidis PT4 (strain P125109)).